The primary structure comprises 269 residues: 5'-nucleotidase SurE (269 aa).

Residues Asp-11, Asp-12, Ser-43, and Asn-101 each contribute to the a divalent metal cation site.

This sequence belongs to the SurE nucleotidase family. It depends on a divalent metal cation as a cofactor.

Its subcellular location is the cytoplasm. It catalyses the reaction a ribonucleoside 5'-phosphate + H2O = a ribonucleoside + phosphate. Its function is as follows. Nucleotidase that shows phosphatase activity on nucleoside 5'-monophosphates. The protein is 5'-nucleotidase SurE of Prochlorococcus marinus (strain AS9601).